The primary structure comprises 619 residues: N-acetylmuramoyl-L-alanine amidase domain-containing protein SAOUHSC_02979 (619 aa).

A signal peptide spans 1–27; the sequence is MPKNKILIYLLSTTLVLPTLVSPTAYA. Disordered regions lie at residues 25-83, 134-226, and 238-290; these read AYAD…TIDD, SDYE…SMSD, and EDAK…NQKD. 3 stretches are compositionally biased toward basic and acidic residues: residues 30–65, 73–82, and 137–146; these read PQKD…KADK, NNDKKFKTID, and EQPRNGEKST. Over residues 147–156 the composition is skewed to low complexity; sequence NDSNKNSDNS. Over residues 157–175 the composition is skewed to basic and acidic residues; sequence IKNDTDTQSSKQDKADNQK. Over residues 176-192 the composition is skewed to polar residues; the sequence is APKSNNTKPSTSNKQPN. Low complexity predominate over residues 214-226; sequence QKSSSKDNQSMSD. Residues 238 to 260 show a composition bias toward basic and acidic residues; that stretch reads EDAKKTQKDYASQSKKDKNEKSN. The interval 327–468 is N-acetylmuramoyl-L-alanine amidase; that stretch reads IAKDAHRIGQ…LNSIIKHYQL (142 aa). Residues 488 to 617 enclose the Peptidase C51 domain; sequence DYDDSSDEFK…AAAEELSYIT (130 aa).

The protein in the N-terminal section; belongs to the N-acetylmuramoyl-L-alanine amidase 2 family.

It is found in the secreted. The chain is N-acetylmuramoyl-L-alanine amidase domain-containing protein SAOUHSC_02979 from Staphylococcus aureus (strain NCTC 8325 / PS 47).